The primary structure comprises 296 residues: Formamidopyrimidine-DNA glycosylase (296 aa).

Proline 2 functions as the Schiff-base intermediate with DNA in the catalytic mechanism. Glutamate 3 functions as the Proton donor in the catalytic mechanism. The active-site Proton donor; for beta-elimination activity is the lysine 58. The DNA site is built by histidine 106, arginine 125, and lysine 168. The FPG-type zinc finger occupies 259–295; sequence RVYDRVGHACPTKGCTGRIGRIVQGGRSTFFCETCQV. Residue arginine 285 is the Proton donor; for delta-elimination activity of the active site.

Belongs to the FPG family. Monomer. Zn(2+) serves as cofactor.

It carries out the reaction Hydrolysis of DNA containing ring-opened 7-methylguanine residues, releasing 2,6-diamino-4-hydroxy-5-(N-methyl)formamidopyrimidine.. The catalysed reaction is 2'-deoxyribonucleotide-(2'-deoxyribose 5'-phosphate)-2'-deoxyribonucleotide-DNA = a 3'-end 2'-deoxyribonucleotide-(2,3-dehydro-2,3-deoxyribose 5'-phosphate)-DNA + a 5'-end 5'-phospho-2'-deoxyribonucleoside-DNA + H(+). Involved in base excision repair of DNA damaged by oxidation or by mutagenic agents. Acts as a DNA glycosylase that recognizes and removes damaged bases. Has a preference for oxidized purines, such as 7,8-dihydro-8-oxoguanine (8-oxoG). Has AP (apurinic/apyrimidinic) lyase activity and introduces nicks in the DNA strand. Cleaves the DNA backbone by beta-delta elimination to generate a single-strand break at the site of the removed base with both 3'- and 5'-phosphates. The protein is Formamidopyrimidine-DNA glycosylase of Methylorubrum populi (strain ATCC BAA-705 / NCIMB 13946 / BJ001) (Methylobacterium populi).